The primary structure comprises 745 residues: Exocyst complex component 3 (745 aa).

The residue at position 28 (Lys28) is an N6-acetyllysine.

It belongs to the SEC6 family. As to quaternary structure, the exocyst complex is composed of EXOC1, EXOC2, EXOC3, EXOC4, EXOC5, EXOC6, EXOC7 and EXOC8. Interacts with EXOC3L1. Interacts with BIRC6/bruce. Interacts with MYRIP. Interacts with SLC6A9.

Its subcellular location is the cytoplasm. The protein localises to the perinuclear region. The protein resides in the cell projection. It localises to the growth cone. It is found in the neuron projection. Its subcellular location is the midbody. The protein localises to the golgi apparatus. Component of the exocyst complex involved in the docking of exocytic vesicles with fusion sites on the plasma membrane. This chain is Exocyst complex component 3 (EXOC3), found in Bos taurus (Bovine).